Here is a 192-residue protein sequence, read N- to C-terminus: UPF0301 protein Bmul_2524/BMULJ_00714 (192 aa).

This sequence belongs to the UPF0301 (AlgH) family.

The protein is UPF0301 protein Bmul_2524/BMULJ_00714 of Burkholderia multivorans (strain ATCC 17616 / 249).